Consider the following 451-residue polypeptide: Porin AaxA (451 aa).

An N-terminal signal peptide occupies residues 1 to 27 (MASFHSSLLTALCTLCTYGILTMPAYG).

This sequence belongs to the OprB family.

The protein resides in the cell outer membrane. Its function is as follows. Facilitates L-arginine uptake, as part of the AaxABC system. The arginine uptake by the bacterium in the macrophage may be a virulence factor against the host innate immune response. This is Porin AaxA (aaxA) from Chlamydia caviae (strain ATCC VR-813 / DSM 19441 / 03DC25 / GPIC) (Chlamydophila caviae).